Reading from the N-terminus, the 253-residue chain is ATP synthase subunit a (253 aa).

6 helical membrane passes run 30–50, 88–108, 118–138, 144–164, 184–204, and 211–231; these read FTNAAFFMLVIVALASLVLLA, FFPFVFSIFMFVFLANLIGLV, IAVTFGLAMIVIGTVVIYGLI, FLGIFAPSGVSPLLLPFMIMI, MLAGHITLKVMGGFVAGLLGA, and VAPLPLAMVVIFTAFELLVAF.

The protein belongs to the ATPase A chain family. F-type ATPases have 2 components, CF(1) - the catalytic core - and CF(0) - the membrane proton channel. CF(1) has five subunits: alpha(3), beta(3), gamma(1), delta(1), epsilon(1). CF(0) has three main subunits: a(1), b(2) and c(9-12). The alpha and beta chains form an alternating ring which encloses part of the gamma chain. CF(1) is attached to CF(0) by a central stalk formed by the gamma and epsilon chains, while a peripheral stalk is formed by the delta and b chains.

The protein resides in the cell inner membrane. Key component of the proton channel; it plays a direct role in the translocation of protons across the membrane. The polypeptide is ATP synthase subunit a (Beijerinckia indica subsp. indica (strain ATCC 9039 / DSM 1715 / NCIMB 8712)).